A 386-amino-acid polypeptide reads, in one-letter code: MPTAHFQHSIRYLNVTNMLIFSIISFLLIYQTNSVVTLSRIDPAGAVDMGFVDVSYNNFTIQSPIHVPDDGTITWCVSKINCKYDYDEVVGVTAAAFDVWSMTGLVFKPTSRCDRAHIRISFKRRYHGDSDFDGEGGLLAHAFLPNQGALSGDIHMDNDETFAFSFNDADYEGDNAPTSYFWTVLHEIGHTLGLQHSSSKQAIMYGFYVKRSFNNGAVTLSTDDMNGINELYHSNEQSTHQSTRHRPHRRPSPDGSCRDERVLRIRRCRRRDRRRRRPKESGELVLCRSVRCHRVHSRRADHLRRQLHMETRSKRTALRRLSIANDDCVGFTTRFRGYIGVRMDGVHRSRHRQRSASVRRNSLPAQCNFRTKRHLSRSLTTTLCTR.

The first 34 residues, 1-34 (MPTAHFQHSIRYLNVTNMLIFSIISFLLIYQTNS), serve as a signal peptide directing secretion. N-linked (GlcNAc...) asparagine; by host glycosylation is found at N14 and N58. H186 is a binding site for Zn(2+). E187 is a catalytic residue. The Zn(2+) site is built by H190 and H196. A disordered region spans residues 235-258 (NEQSTHQSTRHRPHRRPSPDGSCR).

This sequence belongs to the peptidase M10A family. It depends on Zn(2+) as a cofactor.

This chain is Putative matrix metalloproteinase, found in Spodoptera frugiperda (Fall armyworm).